Reading from the N-terminus, the 347-residue chain is MKGSKEIKLTQMVTASGUAAKIGPEDLAKALVGLPKMFDERLLVGFDTSDDAAVYRLDDDKALIQTLDFFTPMVDDPYLFGQIAASNSLSDVYAMVGKPIVAMNIVCFPSCHDMSILGEILKGGADKVIESGAILVGGHTVDDKEPKYGLSVAGLVHPDKVLANSGARPGDALILTKPIGTGIVSTGMKAAMVQKSTEDEVVKIMAHLNKYAAEALDGFNVNSVTDITGFGFLGHAAEMAKGSGVTLEISSKDIPIMSEAEELAKMGIIPAGMYRNKKFIQSDVLCEGVSEHIMDILYDPQTSGGLLVSVPQEHARALADKMTSCGSLAAKIVGRVLSKEEKSIIVI.

Sec18 is an active-site residue. A non-standard amino acid (selenocysteine) is located at residue Sec18. Residues Lys21 and 48 to 50 contribute to the ATP site; that span reads TSD. Asp51 serves as a coordination point for Mg(2+). Residues Asp68, Asp91, and 138 to 140 each bind ATP; that span reads GHT. Asp91 provides a ligand contact to Mg(2+). Asp226 is a Mg(2+) binding site.

Belongs to the selenophosphate synthase 1 family. Class I subfamily. In terms of assembly, homodimer. Requires Mg(2+) as cofactor.

The enzyme catalyses hydrogenselenide + ATP + H2O = selenophosphate + AMP + phosphate + 2 H(+). In terms of biological role, synthesizes selenophosphate from selenide and ATP. This Peptoclostridium acidaminophilum (Eubacterium acidaminophilum) protein is Selenide, water dikinase 2.